The following is a 671-amino-acid chain: Probable potassium transport system protein Kup 2 (671 aa).

The next 12 helical transmembrane spans lie at 18–38 (GFLIALGIVYGDIGTSPLYAM), 60–80 (VSLVIWTLTLITTVKYVLIAL), 103–123 (WLIVPAMIGGATLLADGALTP), 149–169 (VTTLIILAFLFLIQRFGASLV), 173–193 (FGPIMFIWFGFLGVSGLINSF), 218–238 (AGFFILGSIFLVTTGAEALYS), 252–272 (WPFVKICIILSYCGQGAWLLA), 292–312 (MVIYVVILSTLAAIIASQALI), 343–363 (LYIPAVNFALWVTTSFFVLYF), 373–393 (YSLAITITMLMTTTLLTYFLI), 402–422 (IAFISIGLFCIEGSFFAASLV), and 424–444 (FINGAYIVVLIALAIIFVMFI).

It belongs to the HAK/KUP transporter (TC 2.A.72) family.

Its subcellular location is the cell membrane. The catalysed reaction is K(+)(in) + H(+)(in) = K(+)(out) + H(+)(out). In terms of biological role, transport of potassium into the cell. Likely operates as a K(+):H(+) symporter. The sequence is that of Probable potassium transport system protein Kup 2 from Lactococcus lactis subsp. cremoris (strain MG1363).